Reading from the N-terminus, the 1944-residue chain is Anaphase-promoting complex subunit 1 (1944 aa).

Phosphoserine occurs at positions 51, 60, 202, and 286. A Phosphothreonine modification is found at T291. The tract at residues 305 to 343 (LRSLSKGDSPVTSPFQNYSSIHSQSRSTSSPSLHSRSPS) is disordered. Residues S313, S341, S343, S355, S362, S373, and S377 each carry the phosphoserine modification. Positions 323-343 (SSIHSQSRSTSSPSLHSRSPS) are enriched in low complexity. Residues 373–396 (SHNQSPKRHSISHSPNSNSNGSFL) form a disordered region. Residues 384-394 (SHSPNSNSNGS) are compositionally biased toward low complexity. The residue at position 537 (T537) is a Phosphothreonine. A phosphoserine mark is found at S547 and S555. Position 571 is a phosphotyrosine (Y571). Phosphoserine is present on residues S686, S688, and S916. Residues 994–1016 (KGKSVLSSDVPSGTETEEEDDGM) are disordered. Over residues 998 to 1007 (VLSSDVPSGT) the composition is skewed to polar residues. 4 PC repeats span residues 1297–1325 (AAGL…PEQL), 1366–1404 (GATL…PEFL), 1467–1501 (GACL…YLSA), and 1520–1552 (LLSL…EMNY).

This sequence belongs to the APC1 family. In terms of assembly, the mammalian APC/C is composed at least of 14 distinct subunits ANAPC1, ANAPC2, CDC27/APC3, ANAPC4, ANAPC5, CDC16/APC6, ANAPC7, CDC23/APC8, ANAPC10, ANAPC11, CDC26/APC12, ANAPC13, ANAPC15 and ANAPC16 that assemble into a complex of at least 19 chains with a combined molecular mass of around 1.2 MDa; APC/C interacts with FZR1 and FBXO5. Post-translationally, phosphorylated. Phosphorylation on Ser-355 occurs specifically during mitosis.

Its pathway is protein modification; protein ubiquitination. Its function is as follows. Component of the anaphase promoting complex/cyclosome (APC/C), a cell cycle-regulated E3 ubiquitin ligase that controls progression through mitosis and the G1 phase of the cell cycle. The APC/C complex acts by mediating ubiquitination and subsequent degradation of target proteins: it mainly mediates the formation of 'Lys-11'-linked polyubiquitin chains and, to a lower extent, the formation of 'Lys-48'- and 'Lys-63'-linked polyubiquitin chains. The APC/C complex catalyzes assembly of branched 'Lys-11'-/'Lys-48'-linked branched ubiquitin chains on target proteins. This chain is Anaphase-promoting complex subunit 1 (ANAPC1), found in Homo sapiens (Human).